Here is a 525-residue protein sequence, read N- to C-terminus: GMP synthase [glutamine-hydrolyzing] (525 aa).

A Glutamine amidotransferase type-1 domain is found at 9–207; that stretch reads RILILDFGSQ…VQDICGCEAL (199 aa). C86 serves as the catalytic Nucleophile. Residues H181 and E183 contribute to the active site. The 193-residue stretch at 208 to 400 folds into the GMPS ATP-PPase domain; that stretch reads WTASNIVEDA…LGLPYDMVYR (193 aa). 235 to 241 serves as a coordination point for ATP; it reads SGGVDSS.

In terms of assembly, homodimer.

The enzyme catalyses XMP + L-glutamine + ATP + H2O = GMP + L-glutamate + AMP + diphosphate + 2 H(+). It functions in the pathway purine metabolism; GMP biosynthesis; GMP from XMP (L-Gln route): step 1/1. In terms of biological role, catalyzes the synthesis of GMP from XMP. The polypeptide is GMP synthase [glutamine-hydrolyzing] (Pseudomonas entomophila (strain L48)).